A 142-amino-acid polypeptide reads, in one-letter code: HTH-type transcriptional repressor NsrR (142 aa).

Residues 2–129 enclose the HTH rrf2-type domain; the sequence is QLTSFTDYGL…DRHTLAELVE (128 aa). Positions 28-51 form a DNA-binding region, H-T-H motif; that stretch reads ITEVTQVYGVSRNHMVKIINQLSH. C91, C96, and C102 together coordinate [2Fe-2S] cluster.

The cofactor is [2Fe-2S] cluster.

Functionally, nitric oxide-sensitive repressor of genes involved in protecting the cell against nitrosative stress. May require iron for activity. The chain is HTH-type transcriptional repressor NsrR from Proteus mirabilis (strain HI4320).